Consider the following 615-residue polypeptide: Chaperone protein DnaK (615 aa).

The residue at position 174 (threonine 174) is a Phosphothreonine; by autocatalysis. Residues 581-615 are disordered; it reads QAAPKDGAEGDAKSADDNTVDGDFEEVDPNKDDKK. Positions 586–596 are enriched in basic and acidic residues; it reads DGAEGDAKSAD. A compositionally biased stretch (acidic residues) spans 598–607; that stretch reads NTVDGDFEEV.

The protein belongs to the heat shock protein 70 family.

In terms of biological role, acts as a chaperone. This chain is Chaperone protein DnaK, found in Leuconostoc mesenteroides subsp. mesenteroides (strain ATCC 8293 / DSM 20343 / BCRC 11652 / CCM 1803 / JCM 6124 / NCDO 523 / NBRC 100496 / NCIMB 8023 / NCTC 12954 / NRRL B-1118 / 37Y).